The primary structure comprises 371 residues: 4-hydroxyphenylpyruvate dioxygenase-like protein (371 aa).

VOC domains lie at 7 to 135 and 160 to 328; these read RLCH…LLQR and HVDH…VFTK. Fe cation is bound by residues His-163, His-258, and Glu-339.

The protein belongs to the 4HPPD family. Fe cation is required as a cofactor.

The protein localises to the mitochondrion. It carries out the reaction 3-(4-hydroxyphenyl)pyruvate + O2 = (S)-4-hydroxymandelate + CO2. In terms of biological role, iron-dependent dioxygenase that catalyzes the conversion of 4-hydroxyphenylpyruvate (4-HPPA) to 4-hydroxymandelate (4-HMA) in the mitochondria, one of the steps in the biosynthesis of coenzyme Q10 from tyrosine. This Mus musculus (Mouse) protein is 4-hydroxyphenylpyruvate dioxygenase-like protein.